A 231-amino-acid polypeptide reads, in one-letter code: Ion-translocating oxidoreductase complex subunit E (231 aa).

6 helical membrane-spanning segments follow: residues 18-38 (GLVQ…VTNA), 39-59 (LGLG…VSLV), 69-89 (IPVF…LINA), 93-113 (GLYL…VIIG), 128-148 (AFDG…LGAG), and 182-202 (PFLL…LIAG).

Belongs to the NqrDE/RnfAE family. In terms of assembly, the complex is composed of six subunits: RnfA, RnfB, RnfC, RnfD, RnfE and RnfG.

It is found in the cell inner membrane. Part of a membrane-bound complex that couples electron transfer with translocation of ions across the membrane. This is Ion-translocating oxidoreductase complex subunit E from Shewanella denitrificans (strain OS217 / ATCC BAA-1090 / DSM 15013).